We begin with the raw amino-acid sequence, 373 residues long: MAGWSCLVTGAGGFVGQRIIKMLVQEKELQEVRALDKVFRPETKEEFSKLQTKTKVTVLEGDILDAQCLRRACQGISVVIHTAAVIDVTGVIPRQTILDVNLKGTQNLLEACVQASVPAFIFCSSVDVAGPNSYKKIVLNGHEEQNHESTWSDPYPYSKKMAEKAVLAANGSMLKNGGTLNTCALRPMYIYGERSPFIFNAIIRALKNKGILCVTGKFSIANPVYVENVAWAHILAARGLRDPKKSTSIQGQFYYISDDTPHQSYDDLNYTLSKEWGLRPNASWSLPLPLLYWLAFLLETVSFLLRPVYRYRPLFNRHLITLSNSTFTFSYKKAQRDLGYEPLVNWEEAKQKTSEWIGTIVEQHREILDTKCQ.

Residues 10–15 (GAGGFV), tyrosine 155, and lysine 159 contribute to the NADP(+) site. Residue lysine 159 is the Proton donor of the active site. The helical transmembrane segment at 288–308 (LPLLYWLAFLLETVSFLLRPV) threads the bilayer.

It belongs to the 3-beta-HSD family. Steroidogenic tissues (includes testes, ovaries and adrenal glands).

The protein resides in the endoplasmic reticulum membrane. It localises to the mitochondrion membrane. The catalysed reaction is a 3beta-hydroxy-Delta(5)-steroid + NAD(+) = a 3-oxo-Delta(5)-steroid + NADH + H(+). It catalyses the reaction pregnenolone + NAD(+) = pregn-5-ene-3,20-dione + NADH + H(+). The enzyme catalyses 3beta-hydroxyandrost-5-en-17-one + NAD(+) = androst-5-ene-3,17-dione + NADH + H(+). It carries out the reaction androst-5-en-3beta,17beta-diol + NAD(+) = 17beta-hydroxy-androst-5-en-3-one + NADH + H(+). The catalysed reaction is a 3beta-hydroxysteroid + NADP(+) = a 3-oxosteroid + NADPH + H(+). It catalyses the reaction 5alpha-androstane-3beta,17beta-diol + NADP(+) = 17beta-hydroxy-5alpha-androstan-3-one + NADPH + H(+). The enzyme catalyses 3beta-hydroxy-5alpha-androstan-17-one + NADP(+) = 5alpha-androstan-3,17-dione + NADPH + H(+). It carries out the reaction a 3-oxo-Delta(5)-steroid = a 3-oxo-Delta(4)-steroid. The catalysed reaction is pregn-5-ene-3,20-dione = progesterone. It catalyses the reaction androst-5-ene-3,17-dione = androst-4-ene-3,17-dione. The enzyme catalyses 17beta-hydroxy-androst-5-en-3-one = testosterone. It carries out the reaction 5alpha-androstane-3beta,17beta-diol + NAD(+) = 17beta-hydroxy-5alpha-androstan-3-one + NADH + H(+). It functions in the pathway steroid hormone biosynthesis. The protein operates within steroid metabolism. Functionally, a bifunctional enzyme responsible for the oxidation and isomerization of 3beta-hydroxy-Delta(5)-steroid precursors to 3-oxo-Delta(4)-steroids, an essential step in steroid hormone biosynthesis. Specifically catalyzes the conversion of pregnenolone to progesterone, 17alpha-hydroxypregnenolone to 17alpha-hydroxyprogesterone, dehydroepiandrosterone (DHEA) to 4-androstenedione, and androstenediol to testosterone. Additionally, catalyzes the interconversion between 3beta-hydroxy and 3-oxo-5alpha-androstane steroids controlling the bioavalability of the active forms. Specifically converts dihydrotestosterone to its inactive form 5alpha-androstanediol, that does not bind androgen receptor/AR. Also converts androstanedione, a precursor of testosterone and estrone, to epiandrosterone. Expected to use NAD(+) as preferred electron donor for the 3-beta-hydroxy-steroid dehydrogenase activity and NADPH for the 3-ketosteroid reductase activity. The protein is 3 beta-hydroxysteroid dehydrogenase/Delta 5--&gt;4-isomerase type 1 of Mus musculus (Mouse).